A 206-amino-acid chain; its full sequence is uncharacterized protein (206 aa).

This is an uncharacterized protein from Citrus psorosis virus (isolate Spain/P-121) (CPsV).